Consider the following 155-residue polypeptide: Ribosome maturation factor RimP (155 aa).

Belongs to the RimP family.

The protein localises to the cytoplasm. Functionally, required for maturation of 30S ribosomal subunits. In Listeria innocua serovar 6a (strain ATCC BAA-680 / CLIP 11262), this protein is Ribosome maturation factor RimP.